A 463-amino-acid chain; its full sequence is Cytoplasmic tRNA 2-thiolation protein 2 (463 aa).

This sequence belongs to the CTU2/NCS2 family.

The protein localises to the cytoplasm. Its pathway is tRNA modification; 5-methoxycarbonylmethyl-2-thiouridine-tRNA biosynthesis. Functionally, plays a central role in 2-thiolation of mcm(5)S(2)U at tRNA wobble positions of tRNA(Lys), tRNA(Glu) and tRNA(Gln). May act by forming a heterodimer with NCS6 that ligates sulfur from thiocarboxylated URM1 onto the uridine of tRNAs at wobble position. Prior mcm(5) tRNA modification by the elongator complex is required for 2-thiolation. May also be involved in protein urmylation. This Kluyveromyces lactis (strain ATCC 8585 / CBS 2359 / DSM 70799 / NBRC 1267 / NRRL Y-1140 / WM37) (Yeast) protein is Cytoplasmic tRNA 2-thiolation protein 2.